The chain runs to 158 residues: C-type lectin mannose-binding isoform (158 aa).

An N-terminal signal peptide occupies residues 1–23; it reads MGRFLLVTLSLLVGAFSLNEANS. 4 cysteine pairs are disulfide-bonded: cysteine 26–cysteine 37, cysteine 54–cysteine 154, cysteine 61–cysteine 156, and cysteine 129–cysteine 146. One can recognise a C-type lectin domain in the interval 33-155; the sequence is KNGFCYKVFN…CKALYSFICQ (123 aa). A Mannose-binding motif is present at residues 119–121; it reads EPN. Asparagine 121 is a glycosylation site (N-linked (GlcNAc...) asparagine). The Ca(2+) site is built by glutamate 127, asparagine 142, and aspartate 143.

This sequence belongs to the true venom lectin family. Dimer. Probably disulfide-linked homodimer. Expressed by the venom gland.

It is found in the secreted. Mannose-binding lectin that binds to and agglutinates rabbit (but not human) erythrocytes in a calcium-dependent manner. The protein is C-type lectin mannose-binding isoform of Oxyuranus scutellatus (Coastal taipan).